Consider the following 230-residue polypeptide: Claudin-2 (230 aa).

The Cytoplasmic portion of the chain corresponds to 1-7 (MASLGLQ). A helical transmembrane segment spans residues 8–28 (LVGYILGLLGLLGTLVAMLLP). Residues 29–81 (SWRTSSYVGTSIVTAVGFSKGLWMECATHSTGITQCDIYSTLLGLPADIQAAQ) are Extracellular-facing. A disulfide bond links Cys-54 and Cys-64. A helical transmembrane segment spans residues 82-102 (AMMVTSSAISSLACIVSVVGM). At 103-116 (RCTVFCQDSRAKDR) the chain is on the cytoplasmic side. A helical membrane pass occupies residues 117–137 (LAVVGGVFFIIGGLLGFIPVA). The Extracellular portion of the chain corresponds to 138–162 (WNLHGILRDFYSPLVPDSMKFEIGE). Residues 163 to 183 (ALYLGIISSLFSLVAGIILCF) traverse the membrane as a helical segment. Residues 184–230 (SCPLQGNRSDYYDSYQAQPLATRGSPRPGQPPKAKSEFNSYSLTGYV) lie on the Cytoplasmic side of the membrane. Residues 205–230 (TRGSPRPGQPPKAKSEFNSYSLTGYV) are disordered. Residue Lys-218 forms a Glycyl lysine isopeptide (Lys-Gly) (interchain with G-Cter in SUMO) linkage. A phosphoserine mark is found at Ser-219 and Ser-223. Over residues 220–230 (EFNSYSLTGYV) the composition is skewed to polar residues. The segment at 229–230 (YV) is interaction with TJP1, TJP2 and TJP3.

The protein belongs to the claudin family. Can form homo- and heteropolymers with other claudins to mediate paracellular barrier and channel functions of tight junctions in response to physiological stimuli. Homopolymers interact with CLDN3, but not CLDN1, homopolymers. Directly interacts with TJP1/ZO-1, TJP2/ZO-2 and TJP3/ZO-3. The disulfide bond is necessary for pore formation, but is not required for correct protein trafficking.

It localises to the cell junction. The protein localises to the tight junction. It is found in the cell membrane. The enzyme catalyses Na(+)(in) = Na(+)(out). It carries out the reaction K(+)(in) = K(+)(out). It catalyses the reaction Rb(+)(in) = Rb(+)(out). The catalysed reaction is Li(+)(in) = Li(+)(out). The enzyme catalyses Cs(+)(in) = Cs(+)(out). It carries out the reaction Ca(2+)(in) = Ca(2+)(out). It catalyses the reaction methylamine(out) = methylamine(in). The catalysed reaction is choline(out) = choline(in). The enzyme catalyses H2O(in) = H2O(out). Functionally, forms paracellular channels: polymerizes in tight junction strands with cation- and water-selective channels through the strands, conveying epithelial permeability in a process known as paracellular tight junction permeability. In intestinal epithelium, allows for sodium and water fluxes from the peritoneal side to the lumen of the intestine to regulate nutrient absorption and clear enteric pathogens as part of mucosal immune response. In kidney, allows passive sodium and calcium reabsorption across proximal tubules from the lumen back to the bloodstream. In the hepatobiliary tract, allows paracellular water and cation fluxes in the hepatic perivenous areas and biliary epithelium to generate bile flow and maintain osmotic gradients. The protein is Claudin-2 (CLDN2) of Canis lupus familiaris (Dog).